The chain runs to 1710 residues: Neurexin-2 (1710 aa).

A signal peptide spans 1-28 (MALGSRWQPPPQLPPLLLLLALAAGVRG). Residues 29–206 (LEFGGGPGQW…LRGAAADPLC (178 aa)) form the Laminin G-like 1 domain. Topologically, residues 29–1634 (LEFGGGPGQW…EVIRESSSTT (1606 aa)) are extracellular. A glycan (N-linked (GlcNAc...) asparagine) is linked at N60. Residues 202–242 (ADPLCAPARNPCANGGLCTVLAPGEVGCDCSHTGFGGKFCS) enclose the EGF-like 1 domain. Intrachain disulfides connect C206–C219, C213–C229, and C231–C241. Laminin G-like domains are found at residues 289–486 (VATF…SFRC) and 493–686 (DPVT…APFC). D335 is a binding site for Ca(2+). N338 carries N-linked (GlcNAc...) asparagine glycosylation. Residues L352 and M420 each coordinate Ca(2+). Cystine bridges form between C450–C486, C657–C686, C694–C705, C699–C714, and C716–C726. In terms of domain architecture, EGF-like 2 spans 690 to 727 (TLKQCASAPCRNGGICREGWNRFVCDCIGTGFLGRVCE). 2 consecutive Laminin G-like domains span residues 732-904 (VLSY…ITYC) and 918-1093 (DPVT…ERGC). Ca(2+)-binding residues include D779 and L796. The N-linked (GlcNAc...) asparagine glycan is linked to N841. Residue R854 participates in Ca(2+) binding. 4 disulfides stabilise this stretch: C1065/C1093, C1100/C1111, C1105/C1120, and C1122/C1132. The EGF-like 3 domain maps to 1096 to 1133 (PSTTCTEESCANQGVCLQQWDGFTCDCTMTSYGGPVCN). Residues 1137–1345 (TTYIFGKGGA…HLRLVGEGPS (209 aa)) enclose the Laminin G-like 6 domain. The Ca(2+) site is built by D1189, V1206, I1288, and N1290. Residue S1400 is glycosylated (O-linked (Xyl...) (heparan sulfate) serine). Disordered regions lie at residues 1458–1508 (ATQD…LPPT) and 1587–1621 (EPRR…RGPP). The helical transmembrane segment at 1635-1655 (GMVVGIVAAAALCILILLYAM) threads the bilayer. Topologically, residues 1656–1710 (YKYRNRDEGSYQVDQSRNYISNSAQSNGAVVKEKAPAAPKTPSKAKKNKDKEYYV) are cytoplasmic. The tract at residues 1677–1710 (NSAQSNGAVVKEKAPAAPKTPSKAKKNKDKEYYV) is disordered.

As to quaternary structure, the laminin G-like domain 1 binds to NXPH1. Interacts with PATJ. Interacts with CBLN1, CBLN2 and, less avidly, with CBLN4. Specific isoforms bind neuroligins NLGN1, NLGN2 and NLGN3. Specific isoforms bind to alpha-dystroglycan. Interacts (via Laminin G-like 1 domain) with IGSF21 (Ig-like 1 domain) in a trans-interaction manner. Interacts with CLSTN3. In terms of processing, O-glycosylated; contains heparan sulfate. Heparan sulfate attachment is required for synapse development by mediating interactions with neuroligins.

The protein localises to the presynaptic cell membrane. Functionally, neuronal cell surface protein that may be involved in cell recognition and cell adhesion. May mediate intracellular signaling. This is Neurexin-2 from Mus musculus (Mouse).